The sequence spans 388 residues: Probable acetyl-CoA acetyltransferase (388 aa).

Catalysis depends on Cys-84, which acts as the Acyl-thioester intermediate. An Isoglutamyl lysine isopeptide (Lys-Gln) (interchain with Q-Cter in protein Pup) cross-link involves residue Lys-187. Residues His-345 and Cys-375 each act as proton acceptor in the active site.

It belongs to the thiolase-like superfamily. Thiolase family.

The enzyme catalyses 2 acetyl-CoA = acetoacetyl-CoA + CoA. This chain is Probable acetyl-CoA acetyltransferase, found in Mycolicibacterium smegmatis (strain ATCC 700084 / mc(2)155) (Mycobacterium smegmatis).